A 251-amino-acid chain; its full sequence is Derlin-1 (251 aa).

N-acetylserine is present on S2. At 2-15 (SDIGDWFRSIPAIT) the chain is on the cytoplasmic side. Residues 16–31 (RYWFAATVAVPLIGKL) form a helical membrane-spanning segment. Residues 32-69 (GIISPAYFFLWPEAFLYRFQIWRPFTATFYFPVGPGTG) are Lumenal-facing. A helical membrane pass occupies residues 70 to 89 (FLYLVNLYFLYQYSTRLEAG). Topologically, residues 90 to 94 (AFDGR) are cytoplasmic. The chain crosses the membrane as a helical span at residues 95-115 (PADYLFMLLFNWICIVITGLA). Residues 116-122 (MDMQLLM) are Lumenal-facing. A helical transmembrane segment spans residues 123 to 137 (IPLIMSVLYVWAQLN). The Cytoplasmic portion of the chain corresponds to 138 to 154 (RDLIVSFWFGTRFKACY). The helical transmembrane segment at 155 to 166 (LPWVILGFNYII) threads the bilayer. The Lumenal segment spans residues 167–170 (GGSV). Residues 171–189 (INELIGNLVGHLYFFLMFR) form a helical membrane-spanning segment. The Cytoplasmic portion of the chain corresponds to 190–251 (YPMDLGGRNF…WGQGFRLGDQ (62 aa)). S201 carries the post-translational modification Phosphoserine. T202 carries the post-translational modification Phosphothreonine. Position 226 is a phosphoserine (S226). The interval 229 to 251 (RAADQNGGGGRHNWGQGFRLGDQ) is disordered. The SHP-box signature appears at 241–248 (NWGQGFRL).

This sequence belongs to the derlin family. Homotetramer. The four subunits of the tetramer are arranged in a twofold symmetry. Forms homo- and heterooligomers with DERL2 and DERL3; binding to DERL3 is poorer than that between DERL2 and DERL3. Interacts (via SHP-box motif) with VCP. Interacts with AMFR, SELENOS, SEL1L, SELENOK and SYVN1, as well as with SEL1L-SYVN1 and VCP-SELENOS protein complexes; this interaction is weaker than that observed between DERL2 and these complexes. Interacts with NGLY1 and YOD1. Does not bind to EDEM1. Interacts with DNAJB9. Interacts with RNF103. Interacts with HM13. Interacts with XBP1 isoform 1 (via luminal/ectodomain domain); the interaction obviates the need for ectodomain shedding prior HM13/SPP-mediated XBP1 isoform 1 cleavage. Interacts with the signal recognition particle/SRP and the SRP receptor; in the process of endoplasmic reticulum stress-induced pre-emptive quality control. May interact with UBXN6. Interacts with ZFAND2B; probably through VCP. Interacts with CCDC47. Interacts with C18orf32. May interact with TRAM1. Forms a complex with SVIP and VCP/p97. Widely expressed, with lowest levels in brain and heart.

It localises to the endoplasmic reticulum membrane. Its function is as follows. Functional component of endoplasmic reticulum-associated degradation (ERAD) for misfolded lumenal proteins. Forms homotetramers which encircle a large channel traversing the endoplasmic reticulum (ER) membrane. This allows the retrotranslocation of misfolded proteins from the ER into the cytosol where they are ubiquitinated and degraded by the proteasome. The channel has a lateral gate within the membrane which provides direct access to membrane proteins with no need to reenter the ER lumen first. May mediate the interaction between VCP and the misfolded protein. Also involved in endoplasmic reticulum stress-induced pre-emptive quality control, a mechanism that selectively attenuates the translocation of newly synthesized proteins into the endoplasmic reticulum and reroutes them to the cytosol for proteasomal degradation. By controlling the steady-state expression of the IGF1R receptor, indirectly regulates the insulin-like growth factor receptor signaling pathway. This Mus musculus (Mouse) protein is Derlin-1.